Reading from the N-terminus, the 88-residue chain is Apolipoprotein C-I (88 aa).

Positions 1–26 (MRLILSLPVLAVVLAMVLEGPAPAQA) are cleaved as a signal peptide.

This sequence belongs to the apolipoprotein C1 family.

Its subcellular location is the secreted. Inhibitor of lipoprotein binding to the low density lipoprotein (LDL) receptor, LDL receptor-related protein, and very low density lipoprotein (VLDL) receptor. Associates with high density lipoproteins (HDL) and the triacylglycerol-rich lipoproteins in the plasma and makes up about 10% of the protein of the VLDL and 2% of that of HDL. Appears to interfere directly with fatty acid uptake and is also the major plasma inhibitor of cholesteryl ester transfer protein (CETP). Binds free fatty acids and reduces their intracellular esterification. Modulates the interaction of APOE with beta-migrating VLDL and inhibits binding of beta-VLDL to the LDL receptor-related protein. In Eidolon helvum (Straw-colored fruit bat), this protein is Apolipoprotein C-I (APOC1).